Reading from the N-terminus, the 162-residue chain is Ribosome maturation factor RimP (162 aa).

The protein belongs to the RimP family.

The protein localises to the cytoplasm. In terms of biological role, required for maturation of 30S ribosomal subunits. The chain is Ribosome maturation factor RimP from Syntrophotalea carbinolica (strain DSM 2380 / NBRC 103641 / GraBd1) (Pelobacter carbinolicus).